We begin with the raw amino-acid sequence, 266 residues long: Putative carbamate hydrolase RutD (266 aa).

Belongs to the AB hydrolase superfamily. Hydrolase RutD family.

The catalysed reaction is carbamate + 2 H(+) = NH4(+) + CO2. In terms of biological role, involved in pyrimidine catabolism. May facilitate the hydrolysis of carbamate, a reaction that can also occur spontaneously. The polypeptide is Putative carbamate hydrolase RutD (Escherichia coli O7:K1 (strain IAI39 / ExPEC)).